The chain runs to 153 residues: UPF0158 protein PA5073 (153 aa).

It belongs to the UPF0158 family.

This is UPF0158 protein PA5073 from Pseudomonas aeruginosa (strain ATCC 15692 / DSM 22644 / CIP 104116 / JCM 14847 / LMG 12228 / 1C / PRS 101 / PAO1).